The chain runs to 266 residues: 4-hydroxy-tetrahydrodipicolinate reductase (266 aa).

Glycine 10–methionine 15 contacts NAD(+). NADP(+) is bound at residue lysine 38. Residues glycine 99–threonine 101 and alanine 125–phenylalanine 128 each bind NAD(+). Catalysis depends on histidine 155, which acts as the Proton donor/acceptor. Histidine 156 contacts (S)-2,3,4,5-tetrahydrodipicolinate. Lysine 159 serves as the catalytic Proton donor. Glycine 165–threonine 166 contributes to the (S)-2,3,4,5-tetrahydrodipicolinate binding site.

It belongs to the DapB family.

It localises to the cytoplasm. It catalyses the reaction (S)-2,3,4,5-tetrahydrodipicolinate + NAD(+) + H2O = (2S,4S)-4-hydroxy-2,3,4,5-tetrahydrodipicolinate + NADH + H(+). The catalysed reaction is (S)-2,3,4,5-tetrahydrodipicolinate + NADP(+) + H2O = (2S,4S)-4-hydroxy-2,3,4,5-tetrahydrodipicolinate + NADPH + H(+). Its pathway is amino-acid biosynthesis; L-lysine biosynthesis via DAP pathway; (S)-tetrahydrodipicolinate from L-aspartate: step 4/4. In terms of biological role, catalyzes the conversion of 4-hydroxy-tetrahydrodipicolinate (HTPA) to tetrahydrodipicolinate. The sequence is that of 4-hydroxy-tetrahydrodipicolinate reductase from Bacillus cereus (strain ATCC 14579 / DSM 31 / CCUG 7414 / JCM 2152 / NBRC 15305 / NCIMB 9373 / NCTC 2599 / NRRL B-3711).